A 393-amino-acid chain; its full sequence is S-adenosylmethionine synthase (393 aa).

His-16 is an ATP binding site. Asp-18 lines the Mg(2+) pocket. Glu-44 contributes to the K(+) binding site. Residues Glu-57 and Gln-100 each contribute to the L-methionine site. The tract at residues 100 to 110 (QSNDIAQGVDH) is flexible loop. ATP contacts are provided by residues 167–169 (DAK), 238–239 (RF), Asp-247, 253–254 (RK), Ala-270, and Lys-274. Asp-247 contributes to the L-methionine binding site. Lys-278 lines the L-methionine pocket.

This sequence belongs to the AdoMet synthase family. In terms of assembly, homotetramer; dimer of dimers. Mg(2+) is required as a cofactor. Requires K(+) as cofactor.

The protein resides in the cytoplasm. It catalyses the reaction L-methionine + ATP + H2O = S-adenosyl-L-methionine + phosphate + diphosphate. It functions in the pathway amino-acid biosynthesis; S-adenosyl-L-methionine biosynthesis; S-adenosyl-L-methionine from L-methionine: step 1/1. Catalyzes the formation of S-adenosylmethionine (AdoMet) from methionine and ATP. The overall synthetic reaction is composed of two sequential steps, AdoMet formation and the subsequent tripolyphosphate hydrolysis which occurs prior to release of AdoMet from the enzyme. This chain is S-adenosylmethionine synthase, found in Paracidovorax citrulli (strain AAC00-1) (Acidovorax citrulli).